A 240-amino-acid chain; its full sequence is DISARM protein DrmC (240 aa).

The PLD phosphodiesterase domain occupies 174–201; the sequence is GYSSLHAKVIMVDEEKAFVSSANLSYNG. Catalysis depends on residues His-179, Lys-181, and Asp-186.

It belongs to the phospholipase D family.

It is found in the cytoplasm. Functionally, component of antiviral defense system DISARM (defense island system associated with restriction-modification), composed of DrmE, DrmA, DrmB, DrmC and DrmMII. DISARM is probably a multi-gene restriction module, this subunit is probably a phospholipase or nuclease. Expression of DISARM in B.subtilis (strain BEST7003) confers resistance to phages Nf, phi29, phi105, phi3T, SPO1, SPR and SPP1. Protection is over 10(7)-fold against phi3T, 10(4)-10(5)-fold against Nf, phi29, phi105 and SPR, 100-fold against SPO1 and 10-fold against SPP1. DISARM does not interfere with phage adsorption, but instead interferes with (phi3T) DNA replication early in its cycle, preventing replication, circularization and lysogeny and probably causes phage DNA degradation (DNA is degraded in SPP1-infected cells). This is DISARM protein DrmC from Bacillus paralicheniformis (strain ATCC 9945a / NCIMB 11709 / CD-2).